Reading from the N-terminus, the 174-residue chain is Adenylosuccinate synthetase (174 aa).

GTP contacts are provided by residues 13 to 19 (GDEGKGK) and 41 to 43 (GHT). Asp14 (proton acceptor) is an active-site residue. Residues Asp14 and Gly41 each contribute to the Mg(2+) site. IMP-binding positions include 14 to 17 (DEGK), 39 to 42 (NAGH), Thr130, and Arg144. His42 (proton donor) is an active-site residue.

Belongs to the adenylosuccinate synthetase family. In terms of assembly, homodimer. The cofactor is Mg(2+).

The protein resides in the cytoplasm. It catalyses the reaction IMP + L-aspartate + GTP = N(6)-(1,2-dicarboxyethyl)-AMP + GDP + phosphate + 2 H(+). The protein operates within purine metabolism; AMP biosynthesis via de novo pathway; AMP from IMP: step 1/2. Plays an important role in the de novo pathway of purine nucleotide biosynthesis. Catalyzes the first committed step in the biosynthesis of AMP from IMP. This Stutzerimonas stutzeri (Pseudomonas stutzeri) protein is Adenylosuccinate synthetase.